Here is a 63-residue protein sequence, read N- to C-terminus: Beta-defensin 4 (63 aa).

The signal sequence occupies residues 1–22; sequence MRLHHLLLAVLFLVLSAGSGFT. Residue Gln23 is modified to Pyrrolidone carboxylic acid. 3 cysteine pairs are disulfide-bonded: Cys31–Cys60, Cys38–Cys53, and Cys43–Cys61.

Belongs to the beta-defensin family. In terms of tissue distribution, neutrophilic granules.

Its subcellular location is the secreted. In terms of biological role, has bactericidal activity. Active against E.coli ML35 and S.aureus 502A. This chain is Beta-defensin 4 (DEFB4), found in Bos taurus (Bovine).